Here is a 296-residue protein sequence, read N- to C-terminus: Glycine N-acyltransferase (296 aa).

Residue K16 is modified to N6-acetyllysine; alternate. An N6-succinyllysine; alternate modification is found at K16. N6-acetyllysine is present on K113. N6-acetyllysine; alternate is present on residues K127 and K142. 2 positions are modified to N6-succinyllysine; alternate: K127 and K142. An N6-acetyllysine modification is found at K159. K169 bears the N6-succinyllysine mark. An N6-acetyllysine; alternate mark is found at K183 and K256. N6-succinyllysine; alternate occurs at positions 183 and 256. K267 is subject to N6-succinyllysine.

This sequence belongs to the glycine N-acyltransferase family.

It is found in the mitochondrion. The catalysed reaction is an acyl-CoA + glycine = an N-acylglycine + CoA + H(+). It catalyses the reaction benzoyl-CoA + glycine = N-benzoylglycine + CoA + H(+). In terms of biological role, mitochondrial acyltransferase which transfers an acyl group to the N-terminus of glycine and glutamine, although much less efficiently. Can conjugate a multitude of substrates to form a variety of N-acylglycines, thereby detoxify xenobiotics, such as benzoic acid or salicylic acid, and endogenous organic acids, such as isovaleric acid. The sequence is that of Glycine N-acyltransferase (Glyat) from Rattus norvegicus (Rat).